The primary structure comprises 59 residues: MSGTKDKAKGLANEAIGNVKQGVGKVTDNEKLRAEGKAQELKGEAQQVKGNVKDAVKKP.

Positions 27–43 (TDNEKLRAEGKAQELKG) are enriched in basic and acidic residues. Residues 27–59 (TDNEKLRAEGKAQELKGEAQQVKGNVKDAVKKP) are disordered.

This sequence belongs to the UPF0337 (CsbD) family.

The sequence is that of UPF0337 protein PP_4561 from Pseudomonas putida (strain ATCC 47054 / DSM 6125 / CFBP 8728 / NCIMB 11950 / KT2440).